The primary structure comprises 176 residues: Small ribosomal subunit protein uS5 (176 aa).

In terms of domain architecture, S5 DRBM spans 11-74 (LSEVLVDVNR…QAAKKRMMKV (64 aa)).

The protein belongs to the universal ribosomal protein uS5 family. In terms of assembly, part of the 30S ribosomal subunit. Contacts proteins S4 and S8.

Its function is as follows. With S4 and S12 plays an important role in translational accuracy. Functionally, located at the back of the 30S subunit body where it stabilizes the conformation of the head with respect to the body. The chain is Small ribosomal subunit protein uS5 from Rickettsia massiliae (strain Mtu5).